We begin with the raw amino-acid sequence, 193 residues long: Probable type II restriction enzyme HpyAORF263P (193 aa).

This sequence belongs to the BsaWI type II restriction endonuclease family.

It carries out the reaction Endonucleolytic cleavage of DNA to give specific double-stranded fragments with terminal 5'-phosphates.. A P subtype probable restriction enzyme that recognizes the double-stranded sequence CCGG; the cleavage site is unknown. This chain is Probable type II restriction enzyme HpyAORF263P, found in Helicobacter pylori (strain ATCC 700392 / 26695) (Campylobacter pylori).